We begin with the raw amino-acid sequence, 137 residues long: Peptide methionine sulfoxide reductase MsrB (137 aa).

The region spanning 7-129 (AEELKKKLSE…NSASLAFSDE (123 aa)) is the MsrB domain. Zn(2+) contacts are provided by Cys46, Cys49, Cys95, and Cys98. Cys118 (nucleophile) is an active-site residue.

This sequence belongs to the MsrB Met sulfoxide reductase family. Zn(2+) is required as a cofactor.

The enzyme catalyses L-methionyl-[protein] + [thioredoxin]-disulfide + H2O = L-methionyl-(R)-S-oxide-[protein] + [thioredoxin]-dithiol. This chain is Peptide methionine sulfoxide reductase MsrB, found in Salmonella arizonae (strain ATCC BAA-731 / CDC346-86 / RSK2980).